Here is a 61-residue protein sequence, read N- to C-terminus: Phosphoenolpyruvate synthase (61 aa).

It belongs to the PEP-utilizing enzyme family. It depends on Mg(2+) as a cofactor.

The catalysed reaction is pyruvate + ATP + H2O = phosphoenolpyruvate + AMP + phosphate + 2 H(+). The protein operates within carbohydrate biosynthesis; gluconeogenesis. Functionally, catalyzes the phosphorylation of pyruvate to phosphoenolpyruvate. This is Phosphoenolpyruvate synthase (ppsA) from Enterobacter agglomerans (Erwinia herbicola).